The primary structure comprises 927 residues: Autophagy-related protein 13 (927 aa).

Disordered regions lie at residues 1–66, 334–359, 388–559, 628–716, and 786–927; these read MHQQ…PPAD, SLPQQHATSRAPAAEAGSLRDHRSKP, LRSV…AQPG, TESM…TIRE, and QMQL…RRGW. A compositionally biased stretch (polar residues) spans 14-30; that stretch reads PGATTQPNLPSRSNSTR. Composition is skewed to polar residues over residues 393-402, 513-523, and 544-557; these read QPGSDTSSPP, PASTSRYSSSF, and GSSGRQSLASSVAQ. Over residues 630–671 the composition is skewed to low complexity; sequence SMTSSVQMQRSSSSSSRQLTSVPGMTAPASVSASSSPGKPLS. Polar residues predominate over residues 684-716; that stretch reads LSENSIIDYSGQGRITSRQGRTSDNTQPGTIRE. A compositionally biased stretch (basic and acidic residues) spans 793-803; that stretch reads STQRPSDRLEP. Residues 850–868 show a composition bias toward polar residues; sequence HKQTPPQSSRGSFNGSLNR. The span at 891 to 901 shows a compositional bias: basic and acidic residues; it reads PQGRRSIEEAR.

This sequence belongs to the ATG13 family. Fungi subfamily. Hypophosphorylated form interacts with ATG1 to form the ATG1-ATG13 kinase complex. The ATG1-ATG13 complex interacts with the ATG17-ATG29-ATG31 complex through direct interaction with ATG17.

The protein resides in the cytoplasm. Its subcellular location is the preautophagosomal structure. In terms of biological role, activates the ATG1 kinase in a nutritional condition dependent manner through the TOR pathway, leading to autophagy. Involved in ATG9 and ATG23 cycling through the pre-autophagosomal structure. Also involved in cytoplasm to vacuole transport (Cvt) and more specifically in Cvt vesicle formation. Seems to play a role in the switching machinery regulating the conversion between the Cvt pathway and autophagy. Finally, ATG13 is also required for glycogen storage during stationary phase. Autophagy is required for proper vegetative growth, asexual/sexual reproduction, and full virulence. Autophagy is particularly involved in the biosynthesis of deoxynivalenol (DON), an important virulence determinant. The polypeptide is Autophagy-related protein 13 (Gibberella zeae (strain ATCC MYA-4620 / CBS 123657 / FGSC 9075 / NRRL 31084 / PH-1) (Wheat head blight fungus)).